We begin with the raw amino-acid sequence, 344 residues long: Anthranilate phosphoribosyltransferase (344 aa).

5-phospho-alpha-D-ribose 1-diphosphate is bound by residues Gly79, 82–83, Thr87, 89–92, 107–115, and Ser119; these read GD, NIST, and KHGNRSVSS. Residue Gly79 coordinates anthranilate. Ser91 contributes to the Mg(2+) binding site. Residue Asn110 participates in anthranilate binding. Residue Arg165 coordinates anthranilate. 2 residues coordinate Mg(2+): Asp224 and Glu225.

This sequence belongs to the anthranilate phosphoribosyltransferase family. As to quaternary structure, homodimer. Mg(2+) is required as a cofactor.

The catalysed reaction is N-(5-phospho-beta-D-ribosyl)anthranilate + diphosphate = 5-phospho-alpha-D-ribose 1-diphosphate + anthranilate. It functions in the pathway amino-acid biosynthesis; L-tryptophan biosynthesis; L-tryptophan from chorismate: step 2/5. Functionally, catalyzes the transfer of the phosphoribosyl group of 5-phosphorylribose-1-pyrophosphate (PRPP) to anthranilate to yield N-(5'-phosphoribosyl)-anthranilate (PRA). This Salinibacter ruber (strain DSM 13855 / M31) protein is Anthranilate phosphoribosyltransferase.